Here is a 293-residue protein sequence, read N- to C-terminus: Methylsterol monooxygenase 1 (293 aa).

2 helical membrane passes run 55-75 and 100-120; these read LIVH…FQFI and VLLF…YYFT. One can recognise a Fatty acid hydroxylase domain in the interval 145–274; it reads CAVIEDTWHY…FTWWDRIFGT (130 aa). The Histidine box-1 motif lies at 157 to 161; sequence HRLLH. Residues 170 to 174 carry the Histidine box-2 motif; sequence HKVHH. The chain crosses the membrane as a helical span at residues 199–219; the sequence is FFIGIVLLCDHVILLWAWVTI. The Histidine box-3 signature appears at 249 to 255; it reads HHDFHHM.

Belongs to the sterol desaturase family. Requires Fe cation as cofactor. Ubiquitinated by MARCHF6, leading to proteasomal degradation.

The protein localises to the endoplasmic reticulum membrane. It carries out the reaction 4,4-dimethyl-5alpha-cholest-7-en-3beta-ol + 6 Fe(II)-[cytochrome b5] + 3 O2 + 5 H(+) = 4alpha-carboxy-4beta-methyl-5alpha-cholest-7-ene-3beta-ol + 6 Fe(III)-[cytochrome b5] + 4 H2O. The enzyme catalyses 4,4-dimethyl-5alpha-cholesta-8,24-dien-3beta-ol + 6 Fe(II)-[cytochrome b5] + 3 O2 + 5 H(+) = 4beta-methylzymosterol-4alpha-carboxylate + 6 Fe(III)-[cytochrome b5] + 4 H2O. It catalyses the reaction 4alpha-methylzymosterol + 6 Fe(II)-[cytochrome b5] + 3 O2 + 5 H(+) = 4alpha-carboxyzymosterol + 6 Fe(III)-[cytochrome b5] + 4 H2O. The catalysed reaction is 4alpha-methyl-5alpha-cholest-7-en-3beta-ol + 6 Fe(II)-[cytochrome b5] + 3 O2 + 5 H(+) = 4alpha-carboxy-5alpha-cholest-7-en-3beta-ol + 6 Fe(III)-[cytochrome b5] + 4 H2O. It carries out the reaction 4,4-dimethyl-5alpha-cholest-8-en-3beta-ol + 6 Fe(II)-[cytochrome b5] + 3 O2 + 5 H(+) = 4alpha-carboxy-4beta-methyl-5alpha-cholest-8-en-3beta-ol + 6 Fe(III)-[cytochrome b5] + 4 H2O. The enzyme catalyses 4alpha-methyl-5alpha-cholest-8-en-3beta-ol + 6 Fe(II)-[cytochrome b5] + 3 O2 + 5 H(+) = 4alpha-carboxy-5alpha-cholest-8-ene-3beta-ol + 6 Fe(III)-[cytochrome b5] + 4 H2O. Its pathway is steroid biosynthesis; zymosterol biosynthesis; zymosterol from lanosterol: step 3/6. It participates in steroid biosynthesis; cholesterol biosynthesis. Catalyzes the three-step monooxygenation required for the demethylation of 4,4-dimethyl and 4alpha-methylsterols, which can be subsequently metabolized to cholesterol. In Pongo abelii (Sumatran orangutan), this protein is Methylsterol monooxygenase 1 (MSMO1).